A 550-amino-acid chain; its full sequence is Hydroxylamine reductase (550 aa).

4 residues coordinate [2Fe-2S] cluster: cysteine 3, cysteine 6, cysteine 18, and cysteine 25. Positions 249, 273, 317, 405, 433, 458, 492, and 494 each coordinate hybrid [4Fe-2O-2S] cluster. Cysteine persulfide is present on cysteine 405.

It belongs to the HCP family. [2Fe-2S] cluster is required as a cofactor. Requires hybrid [4Fe-2O-2S] cluster as cofactor.

It is found in the cytoplasm. The enzyme catalyses A + NH4(+) + H2O = hydroxylamine + AH2 + H(+). Functionally, catalyzes the reduction of hydroxylamine to form NH(3) and H(2)O. In Salmonella schwarzengrund (strain CVM19633), this protein is Hydroxylamine reductase.